The sequence spans 539 residues: Efflux pump roqT (539 aa).

The disordered stretch occupies residues 1-25; sequence MEKEVATDPLPQEIPSDAPDEGGSL. A run of 12 helical transmembrane segments spans residues 36-56, 108-128, 133-153, 160-180, 191-211, 233-253, 262-282, 305-325, 338-360, 362-384, 395-415, and 502-522; these read VSLT…VTII, LFLF…VGLI, IAGL…AQTV, VFTA…PPLG, WCFY…LFFF, IGSF…QWGG, RIIV…AVQI, WFAI…PIWF, VMNL…LVTI, GYYN…LLST, IGYQ…PFMV, and AFYV…ALEW.

It belongs to the major facilitator superfamily. TCR/Tet family.

Its subcellular location is the membrane. In terms of biological role, efflux pump; part of the gene cluster that mediates the biosynthesis of the mycotoxins roquefortine C and meleagrin. This chain is Efflux pump roqT, found in Penicillium rubens (strain ATCC 28089 / DSM 1075 / NRRL 1951 / Wisconsin 54-1255) (Penicillium chrysogenum).